Reading from the N-terminus, the 108-residue chain is Small proline-rich protein 5 (108 aa).

Residues 1-13 (MSQQKQKQCAPPQ) show a composition bias toward low complexity. Disordered stretches follow at residues 1–24 (MSQQ…QRCP) and 73–108 (PPPQ…SKQK). Composition is skewed to pro residues over residues 14 to 24 (QCCPPPQQRCP) and 73 to 100 (PPPQ…PPPQ).

Positively regulates keratinocyte differentiation by inducing genes associated with epidermal differentiation. The sequence is that of Small proline-rich protein 5 from Homo sapiens (Human).